The sequence spans 96 residues: Large ribosomal subunit protein uL23 (96 aa).

It belongs to the universal ribosomal protein uL23 family. As to quaternary structure, part of the 50S ribosomal subunit. Contacts protein L29, and trigger factor when it is bound to the ribosome.

Its function is as follows. One of the early assembly proteins it binds 23S rRNA. One of the proteins that surrounds the polypeptide exit tunnel on the outside of the ribosome. Forms the main docking site for trigger factor binding to the ribosome. This Bacillus cereus (strain ATCC 10987 / NRS 248) protein is Large ribosomal subunit protein uL23.